The sequence spans 561 residues: Potassium-transporting ATPase potassium-binding subunit (561 aa).

The next 12 membrane-spanning stretches (helical) occupy residues 1–21 (MMAS…LLAR), 62–82 (YLLA…LILM), 132–152 (GLTV…FALM), 173–193 (ITLY…VSQG), 253–273 (FVQM…FGDV), 283–303 (LLWS…WAEV), 327–347 (FGIL…CGAV), 356–376 (ALGG…FGGV), 379–399 (GLYG…LMIG), 416–436 (MTAL…ALAM), 483–503 (MLLA…VLAI), and 526–546 (LFIA…FIPA).

Belongs to the KdpA family. The system is composed of three essential subunits: KdpA, KdpB and KdpC.

It is found in the cell inner membrane. Its function is as follows. Part of the high-affinity ATP-driven potassium transport (or Kdp) system, which catalyzes the hydrolysis of ATP coupled with the electrogenic transport of potassium into the cytoplasm. This subunit binds the periplasmic potassium ions and delivers the ions to the membrane domain of KdpB through an intramembrane tunnel. This is Potassium-transporting ATPase potassium-binding subunit from Erwinia tasmaniensis (strain DSM 17950 / CFBP 7177 / CIP 109463 / NCPPB 4357 / Et1/99).